The primary structure comprises 463 residues: Bifunctional protein HldE (463 aa).

Residues 1-311 (MKQILVVGDL…EEIALILNQT (311 aa)) form a ribokinase region. 191-194 (NRIE) lines the ATP pocket. Residue aspartate 260 is part of the active site. The segment at 334–463 (FTNGCFDILH…IERIKRTCND (130 aa)) is cytidylyltransferase.

This sequence in the N-terminal section; belongs to the carbohydrate kinase PfkB family. The protein in the C-terminal section; belongs to the cytidylyltransferase family. In terms of assembly, homodimer.

It carries out the reaction D-glycero-beta-D-manno-heptose 7-phosphate + ATP = D-glycero-beta-D-manno-heptose 1,7-bisphosphate + ADP + H(+). The enzyme catalyses D-glycero-beta-D-manno-heptose 1-phosphate + ATP + H(+) = ADP-D-glycero-beta-D-manno-heptose + diphosphate. Its pathway is nucleotide-sugar biosynthesis; ADP-L-glycero-beta-D-manno-heptose biosynthesis; ADP-L-glycero-beta-D-manno-heptose from D-glycero-beta-D-manno-heptose 7-phosphate: step 1/4. It functions in the pathway nucleotide-sugar biosynthesis; ADP-L-glycero-beta-D-manno-heptose biosynthesis; ADP-L-glycero-beta-D-manno-heptose from D-glycero-beta-D-manno-heptose 7-phosphate: step 3/4. In terms of biological role, catalyzes the phosphorylation of D-glycero-D-manno-heptose 7-phosphate at the C-1 position to selectively form D-glycero-beta-D-manno-heptose-1,7-bisphosphate. Functionally, catalyzes the ADP transfer from ATP to D-glycero-beta-D-manno-heptose 1-phosphate, yielding ADP-D-glycero-beta-D-manno-heptose. This Helicobacter pylori (strain Shi470) protein is Bifunctional protein HldE.